The chain runs to 338 residues: Anthranilate phosphoribosyltransferase (338 aa).

5-phospho-alpha-D-ribose 1-diphosphate is bound by residues Gly81, 84–85 (GD), Ser89, 91–94 (NVST), 109–117 (KHGNRALSS), and Ala121. Residue Gly81 participates in anthranilate binding. Ser93 provides a ligand contact to Mg(2+). Asn112 is an anthranilate binding site. Arg167 is an anthranilate binding site. Positions 226 and 227 each coordinate Mg(2+).

The protein belongs to the anthranilate phosphoribosyltransferase family. In terms of assembly, homodimer. The cofactor is Mg(2+).

It carries out the reaction N-(5-phospho-beta-D-ribosyl)anthranilate + diphosphate = 5-phospho-alpha-D-ribose 1-diphosphate + anthranilate. It participates in amino-acid biosynthesis; L-tryptophan biosynthesis; L-tryptophan from chorismate: step 2/5. Its function is as follows. Catalyzes the transfer of the phosphoribosyl group of 5-phosphorylribose-1-pyrophosphate (PRPP) to anthranilate to yield N-(5'-phosphoribosyl)-anthranilate (PRA). In Rhodopseudomonas palustris (strain ATCC BAA-98 / CGA009), this protein is Anthranilate phosphoribosyltransferase.